Reading from the N-terminus, the 127-residue chain is Large ribosomal subunit protein bL20c (127 aa).

The protein belongs to the bacterial ribosomal protein bL20 family.

It is found in the plastid. Its subcellular location is the chloroplast. Binds directly to 23S ribosomal RNA and is necessary for the in vitro assembly process of the 50S ribosomal subunit. It is not involved in the protein synthesizing functions of that subunit. This chain is Large ribosomal subunit protein bL20c, found in Jasminum nudiflorum (Winter jasmine).